The chain runs to 336 residues: Dihydroorotate dehydrogenase (quinone) (336 aa).

FMN is bound by residues 62 to 66 (AGLDK) and T86. Residue K66 participates in substrate binding. 111–115 (NRMGF) is a binding site for substrate. FMN contacts are provided by N139 and N172. A substrate-binding site is contributed by N172. S175 (nucleophile) is an active-site residue. Residue N177 coordinates substrate. FMN-binding residues include K217 and T245. 246-247 (NT) contributes to the substrate binding site. FMN-binding positions include G268, G297, and 318–319 (YS).

It belongs to the dihydroorotate dehydrogenase family. Type 2 subfamily. Monomer. It depends on FMN as a cofactor.

The protein resides in the cell membrane. The enzyme catalyses (S)-dihydroorotate + a quinone = orotate + a quinol. It functions in the pathway pyrimidine metabolism; UMP biosynthesis via de novo pathway; orotate from (S)-dihydroorotate (quinone route): step 1/1. Functionally, catalyzes the conversion of dihydroorotate to orotate with quinone as electron acceptor. This chain is Dihydroorotate dehydrogenase (quinone), found in Escherichia coli (strain SE11).